We begin with the raw amino-acid sequence, 308 residues long: Phenylcoumaran benzylic ether reductase TP7 (308 aa).

Residues 11–17, Arg36, and Lys45 contribute to the NADP(+) site; that span reads GGTGYIG. The active-site Proton acceptor is the Lys133. Arg137 serves as a coordination point for NADP(+).

It belongs to the NmrA-type oxidoreductase family. Isoflavone reductase subfamily. In terms of tissue distribution, expressed in flowers. Expressed at low levels in stems.

The enzyme catalyses (-)-dehydrodiconiferyl alcohol + NADPH + H(+) = (S)-isodihydrodehydrodiconiferyl alcohol + NADP(+). It catalyses the reaction (+)-dehydrodiconiferyl alcohol + NADPH + H(+) = (R)-isodihydrodehydrodiconiferyl alcohol + NADP(+). It carries out the reaction (2R,3S)-dihydrodehydrodiconiferyl alcohol + NADPH + H(+) = (S)-tetrahydrodehydrodiconiferyl alcohol + NADP(+). The catalysed reaction is (2S,3R)-dihydrodehydrodiconiferyl alcohol + NADPH + H(+) = (R)-tetrahydrodehydrodiconiferyl alcohol + NADP(+). In terms of biological role, oxidoreductase involved in lignan biosynthesis. Catalyzes the NADPH-dependent reduction of phenylcoumaran benzylic ethers. Converts dehydrodiconiferyl alcohol (DDC) to isodihydrodehydrodiconiferyl alcohol (IDDDC), and dihydrodehydrodiconiferyl alcohol (DDDC) to tetrahydrodehydrodiconiferyl alcohol (TDDC). The protein is Phenylcoumaran benzylic ether reductase TP7 of Nicotiana tabacum (Common tobacco).